The chain runs to 405 residues: Nodal homolog 2-A (405 aa).

An N-terminal signal peptide occupies residues M1–G18. Residues K19 to R282 constitute a propeptide that is removed on maturation. N-linked (GlcNAc...) asparagine glycosylation is found at N71, N172, and N343. Cystine bridges form between C305/C371, C334/C402, and C338/C404.

It belongs to the TGF-beta family. Homodimer; disulfide-linked. Forms heterodimers with the TGF-beta family member derriere. Interacts with tsku; enhances nodal2 activity. First localized to the vegetal region of the blastula. Just prior to gastrulation (stage 10), this expression disappears and instead becomes localized to the dorsal marginal zone, with enrichment in the organizer.

Its subcellular location is the secreted. Cooperation and regulatory loops of multiple nodals are essential for mesendoderm patterning in early embryos. Essential for mesoderm formation and axial patterning during embryonic development. Activates the activin-like signaling pathway to induce dorsal and ventral mesoderm in animal cap ectoderm. In addition, also dorsalizes ventral marginal zone (VMZ) tissues during gastrulation. Induces muscle actin. Appears to act as both a short-range and long-range morphogen. The unprocessed protein inhibits bmp- and wnt-signaling. This is Nodal homolog 2-A (nodal2-a) from Xenopus laevis (African clawed frog).